The following is a 307-amino-acid chain: Coproporphyrin III ferrochelatase (307 aa).

Fe-coproporphyrin III-binding positions include Tyr12, Arg29, Arg45–Tyr46, Ser53, and Tyr124. 2 residues coordinate Fe(2+): His181 and Glu263.

This sequence belongs to the ferrochelatase family.

The protein localises to the cytoplasm. It carries out the reaction Fe-coproporphyrin III + 2 H(+) = coproporphyrin III + Fe(2+). It participates in porphyrin-containing compound metabolism; protoheme biosynthesis. In terms of biological role, involved in coproporphyrin-dependent heme b biosynthesis. Catalyzes the insertion of ferrous iron into coproporphyrin III to form Fe-coproporphyrin III. This Staphylococcus epidermidis (strain ATCC 35984 / DSM 28319 / BCRC 17069 / CCUG 31568 / BM 3577 / RP62A) protein is Coproporphyrin III ferrochelatase.